Consider the following 225-residue polypeptide: MPDIQPITVYGKGGPNPPRVAIILAELDLPHKVIEVPLSKVKEPDYVAINPNGRIPAIYDPNTDLTLWESGAIVEYLVSHYDPDHRISFPAGSNLAALATQWLFFQASGQGPYYGQASWFKKFHHEKVPSAIERYVKEINRVTGVLEGHLSRQKVAADGDGPWLVGGKCSFADLAWIPWQVIVTAIIQPEDGYTVEDYPHVKNWLDRMMARPGVQKGMADIFPST.

The 82-residue stretch at 4–85 (IQPITVYGKG…YLVSHYDPDH (82 aa)) folds into the GST N-terminal domain. The GST C-terminal domain maps to 92 to 225 (GSNLAALATQ…KGMADIFPST (134 aa)).

It belongs to the GST superfamily. Specifically expressed in conidia.

Its pathway is secondary metabolite biosynthesis. Glutathione S-transferase-like protein; part of the gene cluster that mediates the biosynthesis of trypacidin, a mycotoxin with antiprotozoal activity and that plays a role in the infection process. The pathway begins with the synthesis of atrochrysone thioester by the polyketide synthase (PKS) tpcC. The atrochrysone carboxyl ACP thioesterase tpcB then breaks the thioester bond and releases the atrochrysone carboxylic acid from tpcC. The decarboxylase tpcK converts atrochrysone carboxylic acid to atrochrysone which is further reduced into emodin anthrone. The next step is performed by the emodin anthrone oxygenase tpcL that catalyzes the oxidation of emodinanthrone to emodin. Emodin O-methyltransferase encoded by tpcA catalyzes methylation of the 8-hydroxy group of emodin to form questin. Ring cleavage of questin by questin oxidase tpcI leads to desmethylsulochrin via several intermediates including questin epoxide. Another methylation step catalyzed by tpcM leads to the formation of sulochrin which is further converted to monomethylsulfochrin by tpcH. Finally, the tpcJ catalyzes the conversion of monomethylsulfochrin to trypacidin. Trypacidin is toxic for human pulmonary and bronchial epithelial cells by initiating the intracellular formation of nitric oxide (NO) and hydrogen peroxide (H(2)O(2)), thus triggering host necrotic cell death. The trypacidin pathway is also able to produce endocrocin via a distinct route from the endocrocin Enc pathway. The polypeptide is Glutathione S-transferase-like protein tpcF (Aspergillus fumigatus (strain ATCC MYA-4609 / CBS 101355 / FGSC A1100 / Af293) (Neosartorya fumigata)).